A 210-amino-acid polypeptide reads, in one-letter code: Methylthioribulose-1-phosphate dehydratase (210 aa).

Residues His97 and His99 each coordinate Zn(2+).

The protein belongs to the aldolase class II family. MtnB subfamily. As to quaternary structure, homotetramer. Zn(2+) is required as a cofactor.

It carries out the reaction 5-(methylsulfanyl)-D-ribulose 1-phosphate = 5-methylsulfanyl-2,3-dioxopentyl phosphate + H2O. The protein operates within amino-acid biosynthesis; L-methionine biosynthesis via salvage pathway; L-methionine from S-methyl-5-thio-alpha-D-ribose 1-phosphate: step 2/6. In terms of biological role, catalyzes the dehydration of methylthioribulose-1-phosphate (MTRu-1-P) into 2,3-diketo-5-methylthiopentyl-1-phosphate (DK-MTP-1-P). This is Methylthioribulose-1-phosphate dehydratase from Geobacillus kaustophilus (strain HTA426).